Consider the following 161-residue polypeptide: Regulator of ribonuclease activity A (161 aa).

Belongs to the RraA family. In terms of assembly, homotrimer. Binds to both RNA-binding sites in the C-terminal region of Rne and to RhlB.

Its subcellular location is the cytoplasm. Functionally, globally modulates RNA abundance by binding to RNase E (Rne) and regulating its endonucleolytic activity. Can modulate Rne action in a substrate-dependent manner by altering the composition of the degradosome. Modulates RNA-binding and helicase activities of the degradosome. This chain is Regulator of ribonuclease activity A, found in Alteromonas mediterranea (strain DSM 17117 / CIP 110805 / LMG 28347 / Deep ecotype).